The primary structure comprises 350 residues: Putative transport protein YdbI (350 aa).

Helical transmembrane passes span 18–38, 67–87, 145–165, 207–227, 229–249, 257–277, 289–309, and 311–331; these read IFVV…LILL, VVIT…GFVF, ISTF…FLFE, FIIA…MHFP, LFGL…GVVI, IAYS…IFAI, LMSA…IFSE, and FFGI…LDIL.

Belongs to the autoinducer-2 exporter (AI-2E) (TC 2.A.86) family.

The protein localises to the cell membrane. The chain is Putative transport protein YdbI (ydbI) from Bacillus subtilis (strain 168).